A 281-amino-acid chain; its full sequence is Probable endonuclease 4 (281 aa).

H69, H109, E145, D179, H182, H216, D229, H231, and E261 together coordinate Zn(2+).

The protein belongs to the AP endonuclease 2 family. Zn(2+) is required as a cofactor.

It catalyses the reaction Endonucleolytic cleavage to 5'-phosphooligonucleotide end-products.. In terms of biological role, endonuclease IV plays a role in DNA repair. It cleaves phosphodiester bonds at apurinic or apyrimidinic (AP) sites, generating a 3'-hydroxyl group and a 5'-terminal sugar phosphate. This chain is Probable endonuclease 4, found in Glaesserella parasuis serovar 5 (strain SH0165) (Haemophilus parasuis).